A 181-amino-acid polypeptide reads, in one-letter code: Caveolin-1 (181 aa).

Residues 1-107 (MTGGLRDGEK…TKYWCYRLLT (107 aa)) lie on the Cytoplasmic side of the membrane. The helical intramembrane region spans 108-128 (ALVGIPLALIWGIFFAILSFI). The Cytoplasmic segment spans residues 129 to 181 (HIWAVVPCVKSYLIEIHCISRVYSICVHTFCDPLFEAMGKCLGGVRIRTSKEV). Residues Cys136, Cys146, and Cys159 are each lipidated (S-palmitoyl cysteine).

The protein belongs to the caveolin family. Homooligomer.

It is found in the golgi apparatus membrane. The protein localises to the cell membrane. The protein resides in the membrane. Its subcellular location is the caveola. It localises to the membrane raft. Its function is as follows. May act as a positive regulator of T-cell coactivation. May act as a scaffolding protein within caveolar membranes. Interacts directly with G-protein alpha subunits and can functionally regulate their activity. In Takifugu rubripes (Japanese pufferfish), this protein is Caveolin-1 (cav1).